A 328-amino-acid chain; its full sequence is Glyoxylate reductase/hydroxypyruvate reductase (328 aa).

A Phosphoserine modification is found at S36. 83–84 lines the substrate pocket; that stretch reads VG. NADP(+) contacts are provided by residues 162–164, 185–188, S217, and I243; these read GRI and RQPR. Substrate contacts are provided by residues R245, D269, and 293–296; that span reads HIGS. H293 functions as the Proton donor in the catalytic mechanism. G295 serves as a coordination point for NADP(+). A Phosphothreonine modification is found at T298.

Belongs to the D-isomer specific 2-hydroxyacid dehydrogenase family. Homodimer.

It carries out the reaction glycolate + NADP(+) = glyoxylate + NADPH + H(+). It catalyses the reaction (R)-glycerate + NAD(+) = 3-hydroxypyruvate + NADH + H(+). The enzyme catalyses (R)-glycerate + NADP(+) = 3-hydroxypyruvate + NADPH + H(+). Functionally, enzyme with hydroxy-pyruvate reductase, glyoxylate reductase and D-glycerate dehydrogenase enzymatic activities. Reduces hydroxypyruvate to D-glycerate, glyoxylate to glycolate oxidizes D-glycerate to hydroxypyruvate. The polypeptide is Glyoxylate reductase/hydroxypyruvate reductase (Grhpr) (Mus musculus (Mouse)).